The sequence spans 179 residues: Ribosome maturation factor RimM (179 aa).

A PRC barrel domain is found at 100 to 176 (KEEFHLLELI…FVIINPPNGL (77 aa)).

It belongs to the RimM family. As to quaternary structure, binds ribosomal protein uS19.

The protein localises to the cytoplasm. An accessory protein needed during the final step in the assembly of 30S ribosomal subunit, possibly for assembly of the head region. Essential for efficient processing of 16S rRNA. May be needed both before and after RbfA during the maturation of 16S rRNA. It has affinity for free ribosomal 30S subunits but not for 70S ribosomes. The chain is Ribosome maturation factor RimM from Prochlorococcus marinus (strain MIT 9301).